We begin with the raw amino-acid sequence, 81 residues long: Dermaseptin-B2 (81 aa).

An N-terminal signal peptide occupies residues 1-22 (MAFLKKSLFLVLFLGLVSLSIC). A propeptide spanning residues 23–43 (EEEKRENEDEEEQEDDEQSEM) is cleaved from the precursor. The tract at residues 24–46 (EEKRENEDEEEQEDDEQSEMKRG) is disordered. Positions 30-40 (EDEEEQEDDEQ) are enriched in acidic residues. The hinge region that separates the two alpha-helices that constitute the peptide stretch occupies residues 54-55 (VG). Val-78 bears the Valine amide mark. The propeptide occupies 80–81 (EQ).

In terms of processing, amidation permits an increased antimicrobial activity against some microorganisms such as T.album and S.cerevisiae. May contain a D-amino acid residue, since the natural peptide is not identical in chromatographic properties to the synthetic peptide. In terms of tissue distribution, expressed by the skin glands.

It is found in the secreted. Its subcellular location is the target cell membrane. Functionally, cationic amphipathic alpha-helical antimicrobial peptide with potent activity against Gram-negative and Gram-positive bacteria, fungi and protozoa. Acts in a synergistic effect in combination with Plasticin-B1 at doses that are not active alone. Acts by disturbing membrane functions. On model membranes, induces a strong perturbation of anionic lipid bilayers, resides at the hydrocarbon core-water interface, parallel to the plane of the membrane, and interacts preferentially with the polar head groups and glycerol backbone region of the anionic phospholipids, as well as the region of the lipid acyl chain near the bilayer surface. Induces a positive curvature of the bilayer and clustering of anionic lipids, consistent with a carpet mechanism, that may lead to the formation of mixed peptide-phospholipid toroidal, transient pores and membrane permeation/disruption once a threshold peptide accumulation is reached. Also enhances binding of agonists to adenosine A1 receptors (ADORA1), adenosine A2a receptors (ADORA2A), alpha-2 adrenergic receptors (ADRA2A) and 5-hydroxytryptamine 1A receptors (HTR1A). In addition, it enhances guanyl nucleotide exchange which may result in the conversion of receptors to a high affinity state complexed with guanyl nucleotide free G-protein. Affects human behavior eliciting profound malaise, followed by listlessness and then euphoria. Does not show cytotoxic activity on CHO cells. Does not act as a chemoattractant. Does not show hemolytic activity. The chain is Dermaseptin-B2 (ADR) from Phyllomedusa bicolor (Two-colored leaf frog).